The following is a 95-amino-acid chain: Large ribosomal subunit protein uL23 (95 aa).

This sequence belongs to the universal ribosomal protein uL23 family. Contacts protein L29, and trigger factor when it is bound to the ribosome. Part of the 50S ribosomal subunit.

In terms of biological role, one of the early assembly proteins it binds 23S rRNA. One of the proteins that surrounds the polypeptide exit tunnel on the outside of the ribosome. Forms the main docking site for trigger factor binding to the ribosome. This is Large ribosomal subunit protein uL23 from Geobacillus stearothermophilus (Bacillus stearothermophilus).